A 348-amino-acid chain; its full sequence is Mitochondrial glycine transporter (348 aa).

Solcar repeat units lie at residues 10-94 (TKST…IREN), 130-214 (LSNT…SKQH), and 249-333 (RAAS…LIRR). The next 6 membrane-spanning stretches (helical) occupy residues 16-41 (FVAG…TRVQ), 69-95 (GTLP…RENA), 136-161 (LLAG…VRYE), 189-212 (GFGA…EKSK), 253-279 (INFA…KTRI), and 308-326 (GLAL…AWTV).

It belongs to the mitochondrial carrier (TC 2.A.29) family. SLC25A38 subfamily.

It is found in the mitochondrion inner membrane. It carries out the reaction glycine(in) = glycine(out). Its function is as follows. Mitochondrial glycine transporter that imports glycine into the mitochondrial matrix. Plays an important role in providing glycine for the first enzymatic step in heme biosynthesis, the condensation of glycine with succinyl-CoA to produce 5-aminolevulinate (ALA) in the mitochondrial matrix. This Neurospora crassa (strain ATCC 24698 / 74-OR23-1A / CBS 708.71 / DSM 1257 / FGSC 987) protein is Mitochondrial glycine transporter (mic-13).